Reading from the N-terminus, the 145-residue chain is Large ribosomal subunit protein uL11 (145 aa).

The protein belongs to the universal ribosomal protein uL11 family. In terms of assembly, part of the ribosomal stalk of the 50S ribosomal subunit. Interacts with L10 and the large rRNA to form the base of the stalk. L10 forms an elongated spine to which L12 dimers bind in a sequential fashion forming a multimeric L10(L12)X complex. In terms of processing, one or more lysine residues are methylated.

In terms of biological role, forms part of the ribosomal stalk which helps the ribosome interact with GTP-bound translation factors. This chain is Large ribosomal subunit protein uL11, found in Rickettsia peacockii (strain Rustic).